A 338-amino-acid polypeptide reads, in one-letter code: Methionine import ATP-binding protein MetN 1 (338 aa).

The 240-residue stretch at 2–241 folds into the ABC transporter domain; the sequence is IELHQVSKSF…AKHATTKRFV (240 aa). Position 38-45 (38-45) interacts with ATP; sequence GYSGAGKS.

The protein belongs to the ABC transporter superfamily. Methionine importer (TC 3.A.1.24) family. In terms of assembly, the complex is composed of two ATP-binding proteins (MetN), two transmembrane proteins (MetI) and a solute-binding protein (MetQ).

It localises to the cell membrane. It catalyses the reaction L-methionine(out) + ATP + H2O = L-methionine(in) + ADP + phosphate + H(+). It carries out the reaction D-methionine(out) + ATP + H2O = D-methionine(in) + ADP + phosphate + H(+). In terms of biological role, part of the ABC transporter complex MetNIQ involved in methionine import. Responsible for energy coupling to the transport system. The polypeptide is Methionine import ATP-binding protein MetN 1 (Listeria monocytogenes serotype 4b (strain F2365)).